Here is a 210-residue protein sequence, read N- to C-terminus: MTNLNYQQTHFVMSAPDIRHLPSDCGIEVAFAGRSNAGKSSALNTLTNQKSLARTSKTPGRTQLINLFEVVDGKRLVDLPGYGYAEVPEEMKRKWQRALGEYLEKRRSLQGLVVLMDIRHPLKDLDQQMIQWAVESNIQVLVLLTKADKLASGARKAQLNMVREAVLAFNGDVQVEAFSSLKKQGVDKLRQKLDSWFSELAPVEEIQDGE.

One can recognise an EngB-type G domain in the interval 25-199; sequence CGIEVAFAGR…RQKLDSWFSE (175 aa). GTP contacts are provided by residues 33–40, 60–64, 78–81, 145–148, and 178–180; these read GRSNAGKS, GRTQL, DLPG, TKAD, and FSS. Mg(2+) contacts are provided by Ser-40 and Thr-62.

Belongs to the TRAFAC class TrmE-Era-EngA-EngB-Septin-like GTPase superfamily. EngB GTPase family. It depends on Mg(2+) as a cofactor.

Necessary for normal cell division and for the maintenance of normal septation. The chain is Probable GTP-binding protein EngB from Salmonella paratyphi C (strain RKS4594).